Reading from the N-terminus, the 500-residue chain is Protein SLENDER RICE1-LIKE 2 (500 aa).

Residues 68 to 454 (KELEKMALRS…QRLYSASAWR (387 aa)) form the GRAS domain. The segment at 75 to 135 (LRSVNLMVTC…DALAERLFPA (61 aa)) is leucine repeat I (LRI). Residues 154 to 219 (FRGFYEAGPY…GGPPFLRITG (66 aa)) are VHIID. The VHIID signature appears at 185 to 189 (VHVID). Residues 233-265 (DVGLRLAEFARSCSVPFAFRGIAADQLDGLRPW) are leucine repeat II (LRII). The PFYRE stretch occupies residues 275–376 (VAINSVLQLH…EAYLQGEIAD (102 aa)). The LXXLL motif motif lies at 283–287 (LHRLL). The interval 379–454 (SREGSSRVER…QRLYSASAWR (76 aa)) is SAW. Residues 466–500 (SGAADAMEESQNSNTNGGGGGSSGGGHGALNQIMQ) form a disordered region. Positions 481–493 (NGGGGGSSGGGHG) are enriched in gly residues.

This sequence belongs to the GRAS family. Expressed at low levels in leaf blades, leaf sheaths, rachis and flowers. Expressed in the embryo of immature seeds.

Its subcellular location is the nucleus. In terms of biological role, probable transcriptional regulator that acts as a repressor of the gibberellin (GA) signaling pathway. Its repressive activity is weaker than that of SLR1. Its overexpression prevents the GA signaling pathway and induces a dwarf phenotype in Arabidopsis thaliana plants. This is Protein SLENDER RICE1-LIKE 2 from Oryza sativa subsp. japonica (Rice).